The primary structure comprises 500 residues: Probable cytosol aminopeptidase (500 aa).

Residues lysine 268 and aspartate 273 each contribute to the Mn(2+) site. The active site involves lysine 280. Mn(2+)-binding residues include aspartate 291, aspartate 350, and glutamate 352. Arginine 354 is an active-site residue.

It belongs to the peptidase M17 family. Mn(2+) is required as a cofactor.

The protein localises to the cytoplasm. The enzyme catalyses Release of an N-terminal amino acid, Xaa-|-Yaa-, in which Xaa is preferably Leu, but may be other amino acids including Pro although not Arg or Lys, and Yaa may be Pro. Amino acid amides and methyl esters are also readily hydrolyzed, but rates on arylamides are exceedingly low.. It carries out the reaction Release of an N-terminal amino acid, preferentially leucine, but not glutamic or aspartic acids.. Presumably involved in the processing and regular turnover of intracellular proteins. Catalyzes the removal of unsubstituted N-terminal amino acids from various peptides. The protein is Probable cytosol aminopeptidase of Alkaliphilus metalliredigens (strain QYMF).